Here is a 104-residue protein sequence, read N- to C-terminus: Small ribosomal subunit protein bS6c (104 aa).

It belongs to the bacterial ribosomal protein bS6 family.

It localises to the plastid. Its subcellular location is the cyanelle. Its function is as follows. Binds together with bS18 to 16S ribosomal RNA. This chain is Small ribosomal subunit protein bS6c (rps6), found in Cyanophora paradoxa.